Reading from the N-terminus, the 268-residue chain is Calpain small subunit 1 (268 aa).

Position 1 is an N-acetylmethionine (M1). S6 is modified (phosphoserine). Residues 96-130 (EEVRQFRKLFVQLAGDDMEVSATELMNILNKVVTR) form the EF-hand 1; atypical domain. 10 residues coordinate Ca(2+): A109, D112, E114, E119, D137, D152, D154, T156, K158, and E163. EF-hand domains lie at 139–172 (FGID…NNIK), 169–204 (NNIK…AGFH), 205–233 (LNEH…ISCL), and 234–268 (VRLD…TMYS). Residue K179 is modified to N6-acetyllysine. Ca(2+) is bound by residues D182, D184, S186, T188, E193, and D225.

Homodimer or heterodimer of a large (catalytic) and a small (regulatory) subunit. In presence of calcium, the heterodimer dissociates.

The protein localises to the cytoplasm. Its subcellular location is the cell membrane. In terms of biological role, regulatory subunit of the calcium-regulated non-lysosomal thiol-protease which catalyzes limited proteolysis of substrates involved in cytoskeletal remodeling and signal transduction. Essential for embryonic development. This chain is Calpain small subunit 1 (Capns1), found in Mus musculus (Mouse).